Here is a 485-residue protein sequence, read N- to C-terminus: Forkhead box protein N3 (485 aa).

2 disordered regions span residues 1–54 and 85–108; these read MGPV…KGGM and PVQDIDDDTPPSPAQSDMPYDAKQ. Positions 16 to 30 are enriched in polar residues; it reads ISVSSQCYRSSTLSN. Residues 113–209 constitute a DNA-binding region (fork-head); the sequence is KPPYSFSCLI…QALKKTPYHP (97 aa). Disordered regions lie at residues 316–357 and 401–449; these read MESE…ISSS and PLVE…MKEA. Over residues 338–357 the composition is skewed to low complexity; it reads SSAKSANKRSSSPSDSISSS. Over residues 410–422 the composition is skewed to basic residues; that stretch reads QHKKKQHLLKLRR.

In terms of tissue distribution, at early cleavage stages, localized within the animal half of the embryo. At gastrulation, expression expands over the whole embryo excluding the future endodermal cells of the blastopore. During neurulation, expressed in the prospective eye field and in the neural crest cells. Strongly enriched in the eye vesicles at stage 26. From stage 29 onwards, expressed predominantly in the eye, the branchial arches and the vagal ganglion. At stage 38, expressed throughout the head with strongest expression in the head mesenchyme and the eye lens.

It is found in the nucleus. In terms of biological role, acts as a transcriptional repressor. May be involved in DNA damage-inducible cell cycle arrests (checkpoints). The sequence is that of Forkhead box protein N3 from Xenopus laevis (African clawed frog).